The following is a 216-amino-acid chain: Small ribosomal subunit protein uS2 (216 aa).

Belongs to the universal ribosomal protein uS2 family.

The polypeptide is Small ribosomal subunit protein uS2 (Carsonella ruddii (strain PV)).